Reading from the N-terminus, the 47-residue chain is Large ribosomal subunit protein bL34 (47 aa).

A disordered region spans residues 1–47 (MVTEGLKPHISIKKKKRKSGFLARMRTKSGRKIIARRRRKGRKRLAP). Residues 10–47 (ISIKKKKRKSGFLARMRTKSGRKIIARRRRKGRKRLAP) show a composition bias toward basic residues.

This sequence belongs to the bacterial ribosomal protein bL34 family.

The sequence is that of Large ribosomal subunit protein bL34 (rpmH) from Aquifex aeolicus (strain VF5).